The primary structure comprises 775 residues: Semaphorin-3E (775 aa).

The signal sequence occupies residues 1–25 (MASAGHIITLLLWGYLLELWTGGHT). Residues 32 to 516 (RLRLSHKELL…SASAVAQVRF (485 aa)) form the Sema domain. Asn44 carries N-linked (GlcNAc...) asparagine glycosylation. A disulfide bond links Cys105 and Cys115. N-linked (GlcNAc...) asparagine glycosylation is present at Asn126. 4 cysteine pairs are disulfide-bonded: Cys133–Cys142, Cys270–Cys382, Cys294–Cys342, and Cys519–Cys537. N-linked (GlcNAc...) asparagine glycosylation occurs at Asn330. Residues 581 to 669 (ALDKTEEHLA…SFVHTVRKIT (89 aa)) form the Ig-like C2-type domain. 2 N-linked (GlcNAc...) asparagine glycosylation sites follow: Asn595 and Asn596. The cysteines at positions 654 and 729 are disulfide-linked. The interval 742-775 (LKMSPSKWKYANPQEKKLRSKPEHYRLPRHTLDS) is disordered. Basic and acidic residues predominate over residues 755 to 775 (QEKKLRSKPEHYRLPRHTLDS).

It belongs to the semaphorin family. As to quaternary structure, interacts with PLXND1.

The protein resides in the secreted. In terms of biological role, plays an important role in signaling via the cell surface receptor PLXND1. Mediates reorganization of the actin cytoskeleton, leading to the retraction of cell projections. Promotes focal adhesion disassembly and inhibits adhesion of endothelial cells to the extracellular matrix. Regulates angiogenesis, both during embryogenesis and after birth. Can down-regulate sprouting angiogenesis. Required for normal vascular patterning during embryogenesis. Plays an important role in ensuring the specificity of synapse formation. This is Semaphorin-3E (SEMA3E) from Homo sapiens (Human).